Reading from the N-terminus, the 88-residue chain is Small ribosomal subunit protein bS18A (88 aa).

The protein belongs to the bacterial ribosomal protein bS18 family. As to quaternary structure, part of the 30S ribosomal subunit. Forms a tight heterodimer with protein bS6.

Functionally, binds as a heterodimer with protein bS6 to the central domain of the 16S rRNA, where it helps stabilize the platform of the 30S subunit. The sequence is that of Small ribosomal subunit protein bS18A from Roseiflexus sp. (strain RS-1).